A 686-amino-acid polypeptide reads, in one-letter code: U3 small nucleolar RNA-associated protein 4 homolog (686 aa).

14 WD repeats span residues 7–50 (HRVR…ANYF), 51–92 (QEKF…QALN), 93–135 (IKYA…PDKI), 136–181 (QFER…AVHK), 182–226 (MIVD…SATG), 227–275 (TLVK…SSEK), 276–317 (QWVR…LMEK), 318–377 (VEVK…PLSK), 378–427 (NADH…NISL), 428–475 (KRVS…KHLH), 476–516 (AFQP…VKQL), 517–566 (KLHC…WSRT), 567–627 (VQKQ…FPPT), and 628–666 (NESD…AVER). Residue Lys321 forms a Glycyl lysine isopeptide (Lys-Gly) (interchain with G-Cter in SUMO2) linkage.

In terms of assembly, interacts with HIVEP1 Interacts with NOL11. Part of the small subunit (SSU) processome, composed of more than 70 proteins and the RNA chaperone small nucleolar RNA (snoRNA) U3. May be a component of the proposed t-UTP subcomplex of the ribosomal small subunit (SSU) processome containing at least UTP4, WDR43, HEATR1, UTP15, WDR75. Post-translationally, may be phosphorylated during mitosis; may control the association of this protein with WRD43 and UTP15.

It is found in the nucleus. It localises to the nucleolus. The protein localises to the chromosome. Functionally, ribosome biogenesis factor. Involved in nucleolar processing of pre-18S ribosomal RNA. Part of the small subunit (SSU) processome, first precursor of the small eukaryotic ribosomal subunit. During the assembly of the SSU processome in the nucleolus, many ribosome biogenesis factors, an RNA chaperone and ribosomal proteins associate with the nascent pre-rRNA and work in concert to generate RNA folding, modifications, rearrangements and cleavage as well as targeted d Involved in SSU pre-rRNA processing at sites A', A0, 1 and 2b. Required for optimal pre-ribosomal RNA transcription by RNA polymerase. May be a transcriptional regulator. In terms of biological role, (Microbial infection) Acts as a positive regulator of HIVEP1 which specifically binds to the DNA sequence 5'-GGGACTTTCC-3' found in enhancer elements of numerous viral promoters such as those of HIV-1, SV40, or CMV. This is U3 small nucleolar RNA-associated protein 4 homolog from Homo sapiens (Human).